The chain runs to 254 residues: MSDFVRADGRALDEMRPVRIVRGFTTNPAGSVLVEFGNTRVMCTASVEDRVPRFKKDSGEGWLTAEYSMLPSATAERMPRESMRGKVKGRTHEISRLVGRSLRAAIDLKALGENTIALDCDVLQADGGTRTASITGAYVALADALTYLEAEGLVSQNALLPPVAAVSVGLIDGHVCLDLPYEEDSRAEVDMNVVMTESGEFVEIQGTGEHSTFSREQLMQFMDAAEKGCSELIRAQKEALSKPYPKRLPNRKNA.

Residues arginine 90 and 128 to 130 (GTR) contribute to the phosphate site.

The protein belongs to the RNase PH family. As to quaternary structure, homohexameric ring arranged as a trimer of dimers.

It carries out the reaction tRNA(n+1) + phosphate = tRNA(n) + a ribonucleoside 5'-diphosphate. Functionally, phosphorolytic 3'-5' exoribonuclease that plays an important role in tRNA 3'-end maturation. Removes nucleotide residues following the 3'-CCA terminus of tRNAs; can also add nucleotides to the ends of RNA molecules by using nucleoside diphosphates as substrates, but this may not be physiologically important. Probably plays a role in initiation of 16S rRNA degradation (leading to ribosome degradation) during starvation. The chain is Ribonuclease PH from Corynebacterium kroppenstedtii (strain DSM 44385 / JCM 11950 / CIP 105744 / CCUG 35717).